Reading from the N-terminus, the 364-residue chain is Dihydroorotate dehydrogenase (quinone) (364 aa).

FMN is bound by residues 61-65 (AGFDK) and Thr-85. Residue Lys-65 participates in substrate binding. 110–114 (NRMGF) provides a ligand contact to substrate. Residues Asn-139 and Asn-170 each coordinate FMN. Position 170 (Asn-170) interacts with substrate. Ser-173 acts as the Nucleophile in catalysis. Residue Asn-175 coordinates substrate. Positions 214 and 242 each coordinate FMN. A substrate-binding site is contributed by 243-244 (NT). Residues Gly-266, Gly-295, and 316-317 (YS) each bind FMN.

It belongs to the dihydroorotate dehydrogenase family. Type 2 subfamily. In terms of assembly, monomer. FMN serves as cofactor.

It localises to the cell membrane. The catalysed reaction is (S)-dihydroorotate + a quinone = orotate + a quinol. The protein operates within pyrimidine metabolism; UMP biosynthesis via de novo pathway; orotate from (S)-dihydroorotate (quinone route): step 1/1. Catalyzes the conversion of dihydroorotate to orotate with quinone as electron acceptor. The sequence is that of Dihydroorotate dehydrogenase (quinone) from Rhodopseudomonas palustris (strain TIE-1).